A 356-amino-acid chain; its full sequence is Protein disulfide isomerase crld-1 (356 aa).

The signal sequence occupies residues 1 to 17 (MSRILLLLAVLIGATSQ). Over 18–299 (KEVTIKNEKC…DRPFMPIDQQ (282 aa)) the chain is Lumenal. The short motif at 27-30 (CRTC) is the CXXC element. Cysteine 27 and cysteine 30 are oxidised to a cystine. A glycan (N-linked (GlcNAc...) asparagine) is linked at asparagine 122. One can recognise an EGF-like 1 domain in the interval 150–188 (GLSEKADVCFGKGSCHGDGSREGSGKCKCETGYTGNLCR). 5 disulfide bridges follow: cysteine 158–cysteine 176, cysteine 178–cysteine 187, cysteine 245–cysteine 258, cysteine 251–cysteine 267, and cysteine 269–cysteine 281. The region spanning 241–282 (DVNECQNESACTKEHEICVNTVGSFKCECKEGYKKDDEQNCQ) is the EGF-like 2; calcium-binding domain. N-linked (GlcNAc...) asparagine glycosylation is present at asparagine 247. The chain crosses the membrane as a helical span at residues 300–317 (LKLIAFSSLIIIITFVVW). Residues 318–321 (HGSP) lie on the Cytoplasmic side of the membrane. Residues 322–341 (VLYVLTGITIVALILVDLYV) form a helical membrane-spanning segment. Residues 342-356 (NPDTIPDEAKRFLGY) are Lumenal-facing.

The protein belongs to the CRELD family. Interacts with unc-29. Isoforms a: Widely expressed in tissues including body wall muscles, neurons, pharynx, hypodermis, seam cells, intestine and gonad. Isoform b: Widely expressed in tissues including body wall muscles, neurons, pharynx, hypodermis, seam cells, intestine and gonad.

It is found in the endoplasmic reticulum membrane. It localises to the endoplasmic reticulum lumen. The catalysed reaction is Catalyzes the rearrangement of -S-S- bonds in proteins.. Protein disulfide isomerase which associates with the unc-29 subunit of levamisole-sensitive nicotinic acetylcholine receptors (L-nAChR) to promote L-nAChR assembly in the endoplasmic reticulum at neuromuscular junctions. Functionally, promotes L-nAChR assembly in the endoplasmic reticulum at neuromuscular junctions. The protein is Protein disulfide isomerase crld-1 of Caenorhabditis elegans.